A 184-amino-acid polypeptide reads, in one-letter code: Probable chemoreceptor glutamine deamidase CheD (184 aa).

It belongs to the CheD family.

It catalyses the reaction L-glutaminyl-[protein] + H2O = L-glutamyl-[protein] + NH4(+). Its function is as follows. Probably deamidates glutamine residues to glutamate on methyl-accepting chemotaxis receptors (MCPs), playing an important role in chemotaxis. The polypeptide is Probable chemoreceptor glutamine deamidase CheD (Rhizobium rhizogenes (strain K84 / ATCC BAA-868) (Agrobacterium radiobacter)).